Here is a 162-residue protein sequence, read N- to C-terminus: 2-C-methyl-D-erythritol 2,4-cyclodiphosphate synthase (162 aa).

Positions 9 and 11 each coordinate a divalent metal cation. Residues 9–11 and 35–36 contribute to the 4-CDP-2-C-methyl-D-erythritol 2-phosphate site; these read DVH and HS. Residue His-43 coordinates a divalent metal cation. 4-CDP-2-C-methyl-D-erythritol 2-phosphate contacts are provided by residues 57-59, 62-66, 133-136, Phe-140, and Arg-143; these read DIG, FPDTD, and TTTE.

This sequence belongs to the IspF family. As to quaternary structure, homotrimer. A divalent metal cation serves as cofactor.

It catalyses the reaction 4-CDP-2-C-methyl-D-erythritol 2-phosphate = 2-C-methyl-D-erythritol 2,4-cyclic diphosphate + CMP. The protein operates within isoprenoid biosynthesis; isopentenyl diphosphate biosynthesis via DXP pathway; isopentenyl diphosphate from 1-deoxy-D-xylulose 5-phosphate: step 4/6. Functionally, involved in the biosynthesis of isopentenyl diphosphate (IPP) and dimethylallyl diphosphate (DMAPP), two major building blocks of isoprenoid compounds. Catalyzes the conversion of 4-diphosphocytidyl-2-C-methyl-D-erythritol 2-phosphate (CDP-ME2P) to 2-C-methyl-D-erythritol 2,4-cyclodiphosphate (ME-CPP) with a corresponding release of cytidine 5-monophosphate (CMP). The protein is 2-C-methyl-D-erythritol 2,4-cyclodiphosphate synthase of Histophilus somni (strain 129Pt) (Haemophilus somnus).